Consider the following 143-residue polypeptide: Small ribosomal subunit protein bS6 (143 aa).

A disordered region spans residues 98–143 (TEQSLIMKSKDEKGDKPERSERRRRDDEEGEAPAANDNDGDNAEAA). Over residues 105-124 (KSKDEKGDKPERSERRRRDD) the composition is skewed to basic and acidic residues.

It belongs to the bacterial ribosomal protein bS6 family.

Binds together with bS18 to 16S ribosomal RNA. This Xanthomonas euvesicatoria pv. vesicatoria (strain 85-10) (Xanthomonas campestris pv. vesicatoria) protein is Small ribosomal subunit protein bS6.